The sequence spans 968 residues: Pumilio homolog 1 (968 aa).

Disordered stretches follow at residues 1-25 (MIPE…DYEK) and 138-171 (NNVL…TGAS). Ser194 is modified (phosphoserine). 3 disordered regions span residues 204–240 (GHGH…SQGI), 260–303 (GTPD…VTSG), and 360–382 (KSDQ…PHGS). 2 stretches are compositionally biased toward polar residues: residues 211–220 (QQPSRPASRN) and 227–238 (DSNNNLSPSASQ). Residue Thr261 is modified to Phosphothreonine. Residues 291–303 (TSNQSPFNGVTSG) show a composition bias toward polar residues. A PUM-HD domain is found at 610–950 (FGSSMLEEFK…HVVARIEKLV (341 aa)). Pumilio repeat units lie at residues 630 to 665 (EIAG…MVYE), 666 to 701 (EIMP…ELAE), 702 to 737 (KLFD…KMVK), 738 to 773 (ELDG…FIIS), 774 to 810 (TFFG…KVME), 811 to 846 (EILS…VIIK), 847 to 882 (ELAG…LLVN), and 883 to 924 (EMLG…LILT).

It is found in the cytoplasm. Its function is as follows. Sequence-specific RNA-binding protein that regulates translation and mRNA stability by binding the 3'-UTR of target mRNAs. Binds the APUM-binding elements (APBEs) in the 3'-UTR mRNA sequence of CLV1, PNH, WUS and FAS2. The polypeptide is Pumilio homolog 1 (APUM1) (Arabidopsis thaliana (Mouse-ear cress)).